A 550-amino-acid polypeptide reads, in one-letter code: Tether containing UBX domain for GLUT4 (550 aa).

At Ala2 the chain carries N-acetylalanine. Positions 185–320 (AVRSKAPGSP…EPPVDRDPVV (136 aa)) are disordered. A Phosphoserine modification is found at Ser193. Residues 193 to 206 (SPVSSLSADQASSS) are compositionally biased toward low complexity. A compositionally biased stretch (basic and acidic residues) spans 217–226 (SRGDLNHEGD). Over residues 242 to 252 (DAQTKQSTSEP) the composition is skewed to polar residues. Residues 313-376 (PVDRDPVVYH…LVTKAFREAQ (64 aa)) are interaction with GLUT4. Residues 382–458 (ERYPKVALRV…NLFPAALVHF (77 aa)) enclose the UBX domain. A Phosphoserine modification is found at Ser496. The tract at residues 496–550 (SPPLLPAPDPVSLESEPIAEDGALGPPEPIQGTAQPVKRSLGKVPKWLKLPASKR) is disordered.

As to quaternary structure, interacts with VCP. Interacts with VCPKMT. Interacts with GLUT4. As to expression, ubiquitous.

The protein localises to the endomembrane system. Its subcellular location is the endoplasmic reticulum-Golgi intermediate compartment membrane. It localises to the cytoplasm. It is found in the nucleus. In terms of biological role, enhances VCP methylation catalyzed by VCPKMT. Tethering protein that sequesters GLUT4-containing vesicles in the cytoplasm in the absence of insulin. Modulates the amount of GLUT4 that is available at the cell surface. The protein is Tether containing UBX domain for GLUT4 (Aspscr1) of Mus musculus (Mouse).